The primary structure comprises 321 residues: Cytochrome c biogenesis protein CcsA (321 aa).

7 helical membrane-spanning segments follow: residues 9–29, 44–64, 68–88, 143–163, 226–246, 260–274, and 289–309; these read ILTH…LITL, GMIA…ASSG, LSNL…LHMI, MLLS…LLMI, VISL…VWAN, TWAF…IYLH, and VASI…LLGI.

It belongs to the CcmF/CycK/Ccl1/NrfE/CcsA family. May interact with Ccs1.

The protein localises to the plastid. The protein resides in the chloroplast thylakoid membrane. Its function is as follows. Required during biogenesis of c-type cytochromes (cytochrome c6 and cytochrome f) at the step of heme attachment. This Oryza sativa subsp. indica (Rice) protein is Cytochrome c biogenesis protein CcsA.